Here is a 346-residue protein sequence, read N- to C-terminus: High mobility group protein 20A (346 aa).

Polar residues-rich tracts occupy residues 1–10 (MESLMASSTL) and 55–65 (SQGQLLQSEAS). Disordered stretches follow at residues 1-112 (MESL…YVRF) and 178-210 (FSRK…TEVK). Basic and acidic residues predominate over residues 71–81 (NEQRPEDEQRS). Residues 82 to 95 (KRGGWSKGRKRKKP) show a composition bias toward basic residues. The segment at residues 102 to 170 (PKSPLTGYVR…RYMKELEQYQ (69 aa)) is a DNA-binding region (HMG box). Serine 104 carries the post-translational modification Phosphoserine. Basic and acidic residues predominate over residues 181 to 210 (KTQDRQKGKSHRQDAARQATHDHEKETEVK). The stretch at 228 to 272 (SKAREAELRQLRKSNMEFEERNAALQKHVESMRTAVEKLEVDVIQ) forms a coiled coil.

In terms of assembly, interacts with DTNB. As to expression, expressed in brain. Detected in mature neurons.

The protein localises to the nucleus. Functionally, plays a role in neuronal differentiation as chromatin-associated protein. Acts as inhibitor of HMG20B. Overcomes the repressive effects of the neuronal silencer REST and induces the activation of neuronal-specific genes. Involved in the recruitment of the histone methyltransferase KMT2A/MLL1 and consequent increased methylation of histone H3 lysine 4. The chain is High mobility group protein 20A (Hmg20a) from Mus musculus (Mouse).